We begin with the raw amino-acid sequence, 494 residues long: MTYDPENAMGEARADAPVEAEKEHEATQTTVKESTLGYDNSSDPSRRDSYRPTKLQSNLTIVSCYIANFSDGFQNSLANPTNVIFKKLLGTDGYPSEMQTRISNSLLIGAILGVLALGYTSDMFSRRAGLLFTSGLVAIGTLMSTLALQVHPTYNMLWYFVIVRGIAGFGVGGEYPPSAAAGIEESDDFKRKYRGPLFVSFTTLMATSAAPIQMIVYLICLIASNDNLPVTFHAIYSIATILPVIIMVLRFFMTDSTLFHYSNFKRQKRPLKFYLLLLKRYRWRLFTTSLAFFLYDFINFPNSIMSSTIINSLVKDHNIRTTAIWQVILGALPVPGVIVGAWLTNAIGRRYTGILGFAGYMVLGFVIGGTFPHLSKNMPAFVVLYGLLQALGHMGPGATIGLISTESFPTAMRGMGYSIATAFGRTGAAVGTQCFTPLQERAGKQSTFYLAGGIAILGMIVYWFLPESSELNLEEEDRDLSVFLAENGFPMEKA.

The disordered stretch occupies residues 1–51; the sequence is MTYDPENAMGEARADAPVEAEKEHEATQTTVKESTLGYDNSSDPSRRDSYR. The segment covering 12–26 has biased composition (basic and acidic residues); that stretch reads ARADAPVEAEKEHEA. N-linked (GlcNAc...) asparagine glycans are attached at residues Asn-40, Asn-58, and Asn-68. 10 consecutive transmembrane segments (helical) span residues 105 to 125, 128 to 148, 156 to 176, 203 to 223, 228 to 248, 290 to 310, 323 to 343, 354 to 374, 383 to 403, and 446 to 466; these read SLLI…DMFS, AGLL…TLAL, MLWY…GEYP, TLMA…CLIA, LPVT…IIMV, LAFF…STII, AIWQ…GAWL, ILGF…FPHL, VLYG…IGLI, and STFY…WFLP.

It belongs to the major facilitator superfamily. Sugar transporter (TC 2.A.1.1) family.

Its subcellular location is the cell membrane. MFS-type transporter; part of the lna gene cluster that mediates the biosynthesis of diastereomeric piperazines. Lna and lnb clusters encode sets of enzymes that produce overlapping sets of previously undescribed metabolites such as piperazinomycin-like metabolites or morpholine. The lna and lnb biosynthetic pathways appear to be part of a signaling network that controls the formation of sclerotia, a resilient overwintering structure. May be involved in the secretion of the metabolites produced by the lna and lnb clusters. The sequence is that of MFS-type transporter lnaF from Aspergillus flavus (strain ATCC 200026 / FGSC A1120 / IAM 13836 / NRRL 3357 / JCM 12722 / SRRC 167).